A 316-amino-acid chain; its full sequence is MADKLTQLKALTTVVADTGDIEAIKRYQPIDATTNPSLVLKASEIPEYAALIEDAISWAKSQSQDKAQQIIDAGDKLAVNIGLEVLKIVPGRISTEVDARLSFDTEASIAKARKLIRLYNEAGIANDRILIKLASTWEGIRAAEVLEKEGIQCNLTLLFSFAQARACAEAGAFLISPFVGRILDWYKAKHNRDYTPSEDPGVVSVTAIYDYYKQHDYPTVVMGASFRNTGEILELAGCDRLTIGLPLLEELSKTEGAVVRKLNYTGERKAKPTPMSEAEFRWELNQDAMAHEKLGEGIRMFAVDQGKLETMLASRL.

Residue lysine 132 is the Schiff-base intermediate with substrate of the active site.

The protein belongs to the transaldolase family. Type 1 subfamily. As to quaternary structure, homodimer.

Its subcellular location is the cytoplasm. The catalysed reaction is D-sedoheptulose 7-phosphate + D-glyceraldehyde 3-phosphate = D-erythrose 4-phosphate + beta-D-fructose 6-phosphate. It functions in the pathway carbohydrate degradation; pentose phosphate pathway; D-glyceraldehyde 3-phosphate and beta-D-fructose 6-phosphate from D-ribose 5-phosphate and D-xylulose 5-phosphate (non-oxidative stage): step 2/3. Its function is as follows. Transaldolase is important for the balance of metabolites in the pentose-phosphate pathway. This chain is Transaldolase, found in Aeromonas salmonicida (strain A449).